A 190-amino-acid polypeptide reads, in one-letter code: Peptidyl-tRNA hydrolase (190 aa).

Tyr14 is a tRNA binding site. His19 functions as the Proton acceptor in the catalytic mechanism. Residues Tyr64, Asn66, and Asn112 each coordinate tRNA.

The protein belongs to the PTH family. In terms of assembly, monomer.

Its subcellular location is the cytoplasm. The enzyme catalyses an N-acyl-L-alpha-aminoacyl-tRNA + H2O = an N-acyl-L-amino acid + a tRNA + H(+). Its function is as follows. Hydrolyzes ribosome-free peptidyl-tRNAs (with 1 or more amino acids incorporated), which drop off the ribosome during protein synthesis, or as a result of ribosome stalling. Functionally, catalyzes the release of premature peptidyl moieties from peptidyl-tRNA molecules trapped in stalled 50S ribosomal subunits, and thus maintains levels of free tRNAs and 50S ribosomes. This chain is Peptidyl-tRNA hydrolase, found in Chlorobaculum parvum (strain DSM 263 / NCIMB 8327) (Chlorobium vibrioforme subsp. thiosulfatophilum).